A 446-amino-acid chain; its full sequence is uncharacterized protein (446 aa).

2 positions are modified to phosphoserine: S393 and S397. A disordered region spans residues 411–431 (LSSTERRDLDRVRDKQKKQDQ).

It belongs to the IFRD family.

The protein localises to the cytoplasm. This is an uncharacterized protein from Schizosaccharomyces pombe (strain 972 / ATCC 24843) (Fission yeast).